A 501-amino-acid polypeptide reads, in one-letter code: Glycerol kinase (501 aa).

An ADP-binding site is contributed by Thr-14. ATP contacts are provided by Thr-14, Thr-15, and Ser-16. Thr-14 contacts sn-glycerol 3-phosphate. Arg-18 provides a ligand contact to ADP. Arg-84, Glu-85, and Tyr-136 together coordinate sn-glycerol 3-phosphate. Positions 84, 85, and 136 each coordinate glycerol. His-231 is subject to Phosphohistidine; by HPr. Sn-glycerol 3-phosphate is bound at residue Asp-245. 2 residues coordinate glycerol: Asp-245 and Gln-246. ADP-binding residues include Thr-267 and Gly-310. 4 residues coordinate ATP: Thr-267, Gly-310, Gln-314, and Gly-411. ADP is bound by residues Gly-411 and Asn-415.

This sequence belongs to the FGGY kinase family. In terms of assembly, homotetramer and homodimer (in equilibrium). In terms of processing, the phosphoenolpyruvate-dependent sugar phosphotransferase system (PTS), including enzyme I, and histidine-containing protein (HPr) are required for the phosphorylation of His-231, which leads to the activation of the enzyme.

It catalyses the reaction glycerol + ATP = sn-glycerol 3-phosphate + ADP + H(+). It functions in the pathway polyol metabolism; glycerol degradation via glycerol kinase pathway; sn-glycerol 3-phosphate from glycerol: step 1/1. With respect to regulation, activated by phosphorylation and inhibited by fructose 1,6-bisphosphate (FBP). Functionally, key enzyme in the regulation of glycerol uptake and metabolism. Catalyzes the phosphorylation of glycerol to yield sn-glycerol 3-phosphate. The sequence is that of Glycerol kinase from Enterococcus faecalis (strain ATCC 700802 / V583).